A 1052-amino-acid chain; its full sequence is Membrane-bound transcription factor site-1 protease (1052 aa).

The signal sequence occupies residues 1–17; that stretch reads MKLVNIWLLLLVVLLCG. Residues 18–186 constitute a propeptide that is removed on maturation; that stretch reads KKHLGDRLEK…TGRHSSRRLL (169 aa). Ser168 carries the phosphoserine; by FAM20C modification. At 187–998 the chain is on the lumenal side; sequence RAIPRQVAQT…IMPGRYNQEV (812 aa). The 283-residue stretch at 190-472 folds into the Peptidase S8 domain; sequence PRQVAQTLQA…HGKLDLLRAY (283 aa). Asp218 functions as the Charge relay system in the catalytic mechanism. Asn236 carries an N-linked (GlcNAc...) asparagine glycan. His249 (charge relay system) is an active-site residue. N-linked (GlcNAc...) asparagine glycosylation occurs at Asn305. Catalysis depends on Ser414, which acts as the Charge relay system. Asn515 and Asn728 each carry an N-linked (GlcNAc...) asparagine glycan. Polar residues predominate over residues 877 to 887; that stretch reads PSLSHSGNRQR. Residues 877 to 899 form a disordered region; sequence PSLSHSGNRQRPPSGAGSVTPER. N-linked (GlcNAc...) asparagine glycosylation occurs at Asn939. The chain crosses the membrane as a helical span at residues 999 to 1021; sequence GQTIPVFAFLGAMVVLAFFVVQI. Topologically, residues 1022 to 1052 are cytoplasmic; sequence NKAKSRPKRRKPRVKRPQLMQQVHPPKTPSV. Over residues 1027–1037 the composition is skewed to basic residues; it reads RPKRRKPRVKR. Residues 1027 to 1052 are disordered; sequence RPKRRKPRVKRPQLMQQVHPPKTPSV.

The protein belongs to the peptidase S8 family. In terms of assembly, interacts with LYSET; this interaction bridges GNPTAB to MBTPS1. The cofactor is Ca(2+). The 148 kDa zymogen is processed progressively into two membrane-bound 120 and 106 kDa forms in the endoplasmic reticulum, and late into a secreted 98 kDa form. The propeptide is autocatalytically removed through an intramolecular cleavage after Leu-186. Further cleavage generates 14, 10, and 8 kDa intermediates. Widely expressed.

It is found in the endoplasmic reticulum membrane. The protein resides in the golgi apparatus membrane. The catalysed reaction is Processes precursors containing basic and hydrophobic/aliphatic residues at P4 and P2, respectively, with a relatively relaxed acceptance of amino acids at P1 and P3.. Inhibited by divalent copper and zinc ions, but not by nickel or cobalt. Inhibited by its prosegment, but not smaller fragments. Inhibited by 4-(2-aminoethyl)benzenesulfonyl fluoride (AEBSF), a serine protease inhibitor. Its function is as follows. Serine protease that cleaves after hydrophobic or small residues, provided that Arg or Lys is in position P4: known substrates include SREBF1/SREBP1, SREBF2/SREBP2, BDNF, GNPTAB, ATF6, ATF6B and FAM20C. Cleaves substrates after Arg-Ser-Val-Leu (SREBP2), Arg-His-Leu-Leu (ATF6), Arg-Gly-Leu-Thr (BDNF) and its own propeptide after Arg-Arg-Leu-Leu. Catalyzes the first step in the proteolytic activation of the sterol regulatory element-binding proteins (SREBPs) SREBF1/SREBP1 and SREBF2/SREBP2. Also mediates the first step in the proteolytic activation of the cyclic AMP-dependent transcription factor ATF-6 (ATF6 and ATF6B). Mediates the protein cleavage of GNPTAB into subunit alpha and beta, thereby participating in biogenesis of lysosomes. Cleaves the propeptide from FAM20C which is required for FAM20C secretion from the Golgi apparatus membrane and for enhancement of FAM20C kinase activity, promoting osteoblast differentiation and biomineralization. Involved in the regulation of M6P-dependent Golgi-to-lysosome trafficking of lysosomal enzymes. It is required for the activation of CREB3L2/BBF2H7, a transcriptional activator of MIA3/TANGO and other genes controlling mega vesicle formation. Therefore, it plays a key role in the regulation of mega vesicle-mediated collagen trafficking. In astrocytes and osteoblasts, upon DNA damage and ER stress, mediates the first step of the regulated intramembrane proteolytic activation of the transcription factor CREB3L1, leading to the inhibition of cell-cycle progression. In Homo sapiens (Human), this protein is Membrane-bound transcription factor site-1 protease.